A 462-amino-acid polypeptide reads, in one-letter code: UDP-N-acetylmuramoylalanine--D-glutamate ligase (462 aa).

Residue 112–118 participates in ATP binding; it reads GTNGKTT.

This sequence belongs to the MurCDEF family.

Its subcellular location is the cytoplasm. The enzyme catalyses UDP-N-acetyl-alpha-D-muramoyl-L-alanine + D-glutamate + ATP = UDP-N-acetyl-alpha-D-muramoyl-L-alanyl-D-glutamate + ADP + phosphate + H(+). It functions in the pathway cell wall biogenesis; peptidoglycan biosynthesis. Functionally, cell wall formation. Catalyzes the addition of glutamate to the nucleotide precursor UDP-N-acetylmuramoyl-L-alanine (UMA). The protein is UDP-N-acetylmuramoylalanine--D-glutamate ligase of Nostoc sp. (strain PCC 7120 / SAG 25.82 / UTEX 2576).